Consider the following 70-residue polypeptide: Large ribosomal subunit protein bL31 (70 aa).

Position 8 is an N6-acetyllysine (Lys-8). The Zn(2+) site is built by Cys-16, Cys-18, Cys-37, and Cys-40.

It belongs to the bacterial ribosomal protein bL31 family. Type A subfamily. Part of the 50S ribosomal subunit. Zn(2+) serves as cofactor.

Binds the 23S rRNA. In Escherichia coli O6:K15:H31 (strain 536 / UPEC), this protein is Large ribosomal subunit protein bL31.